The chain runs to 308 residues: uncharacterized protein (308 aa).

This is an uncharacterized protein from Bos taurus (Bovine).